We begin with the raw amino-acid sequence, 444 residues long: 23S rRNA (uracil(1939)-C(5))-methyltransferase RlmD (444 aa).

Residues 5 to 67 enclose the TRAM domain; it reads RNRFDRTPFQ…RHFDEAKTVE (63 aa). Positions 80, 86, 89, and 168 each coordinate [4Fe-4S] cluster. S-adenosyl-L-methionine is bound by residues Gln276, Phe305, Asn310, Glu326, Asp353, and Asp374. Cys400 functions as the Nucleophile in the catalytic mechanism.

The protein belongs to the class I-like SAM-binding methyltransferase superfamily. RNA M5U methyltransferase family. RlmD subfamily.

It carries out the reaction uridine(1939) in 23S rRNA + S-adenosyl-L-methionine = 5-methyluridine(1939) in 23S rRNA + S-adenosyl-L-homocysteine + H(+). In terms of biological role, catalyzes the formation of 5-methyl-uridine at position 1939 (m5U1939) in 23S rRNA. This chain is 23S rRNA (uracil(1939)-C(5))-methyltransferase RlmD, found in Xanthomonas oryzae pv. oryzae (strain KACC10331 / KXO85).